A 247-amino-acid chain; its full sequence is Osmotin-like protein OSML81 (247 aa).

The signal sequence occupies residues 1–21; the sequence is MGYLRSSFIFSLLAFVTYTYA. 8 disulfide bridges follow: Cys-30–Cys-225, Cys-72–Cys-82, Cys-87–Cys-93, Cys-141–Cys-213, Cys-146–Cys-196, Cys-154–Cys-164, Cys-168–Cys-177, and Cys-178–Cys-183.

The protein belongs to the thaumatin family.

The protein is Osmotin-like protein OSML81 of Solanum commersonii (Commerson's wild potato).